Consider the following 356-residue polypeptide: Cyclin-D4-1 (356 aa).

The protein belongs to the cyclin family. Cyclin D subfamily.

The protein is Cyclin-D4-1 (CYCD4-1) of Oryza sativa subsp. japonica (Rice).